The sequence spans 299 residues: HTH-type transcriptional regulator PgrR (299 aa).

Residues 4–61 (EEIADLMAFVVVAEERSFTRAAARLSMAQSALSQIVRRIEERLGLRLLTRTTRSVVPT) form the HTH lysR-type domain. A DNA-binding region (H-T-H motif) is located at residues 21–40 (FTRAAARLSMAQSALSQIVR).

The protein belongs to the LysR transcriptional regulatory family.

Functionally, regulates the expression of genes involved in peptidoglycan (PG) degradation. Could play a role in switch control between recycling and degradation of PG peptides. Negatively regulates the expression of the ycjY-ymjD-ymjC-mpaA operon by binding to the PgrR-box. In addition, other genes are predicted to be under the control of PgrR, including genes related to membrane formation and function. The chain is HTH-type transcriptional regulator PgrR (pgrR) from Escherichia coli (strain K12).